We begin with the raw amino-acid sequence, 323 residues long: Thymidylate synthase (323 aa).

DUMP is bound by residues R21 and 172-173; that span reads RR. C192 (nucleophile) is an active-site residue. Residues 214–217, N225, and 255–257 contribute to the dUMP site; these read RSND and HVY. D217 contributes to the (6R)-5,10-methylene-5,6,7,8-tetrahydrofolate binding site. A (6R)-5,10-methylene-5,6,7,8-tetrahydrofolate-binding site is contributed by A322.

This sequence belongs to the thymidylate synthase family. Bacterial-type ThyA subfamily. In terms of assembly, homodimer.

It is found in the cytoplasm. The enzyme catalyses dUMP + (6R)-5,10-methylene-5,6,7,8-tetrahydrofolate = 7,8-dihydrofolate + dTMP. The protein operates within pyrimidine metabolism; dTTP biosynthesis. Functionally, catalyzes the reductive methylation of 2'-deoxyuridine-5'-monophosphate (dUMP) to 2'-deoxythymidine-5'-monophosphate (dTMP) while utilizing 5,10-methylenetetrahydrofolate (mTHF) as the methyl donor and reductant in the reaction, yielding dihydrofolate (DHF) as a by-product. This enzymatic reaction provides an intracellular de novo source of dTMP, an essential precursor for DNA biosynthesis. The protein is Thymidylate synthase of Bordetella parapertussis (strain 12822 / ATCC BAA-587 / NCTC 13253).